The sequence spans 173 residues: Crossover junction endodeoxyribonuclease RuvC (173 aa).

Catalysis depends on residues Asp8, Glu67, and Asp139. Mg(2+) is bound by residues Asp8, Glu67, and Asp139.

The protein belongs to the RuvC family. As to quaternary structure, homodimer which binds Holliday junction (HJ) DNA. The HJ becomes 2-fold symmetrical on binding to RuvC with unstacked arms; it has a different conformation from HJ DNA in complex with RuvA. In the full resolvosome a probable DNA-RuvA(4)-RuvB(12)-RuvC(2) complex forms which resolves the HJ. Mg(2+) is required as a cofactor.

The protein localises to the cytoplasm. It catalyses the reaction Endonucleolytic cleavage at a junction such as a reciprocal single-stranded crossover between two homologous DNA duplexes (Holliday junction).. The RuvA-RuvB-RuvC complex processes Holliday junction (HJ) DNA during genetic recombination and DNA repair. Endonuclease that resolves HJ intermediates. Cleaves cruciform DNA by making single-stranded nicks across the HJ at symmetrical positions within the homologous arms, yielding a 5'-phosphate and a 3'-hydroxyl group; requires a central core of homology in the junction. The consensus cleavage sequence is 5'-(A/T)TT(C/G)-3'. Cleavage occurs on the 3'-side of the TT dinucleotide at the point of strand exchange. HJ branch migration catalyzed by RuvA-RuvB allows RuvC to scan DNA until it finds its consensus sequence, where it cleaves and resolves the cruciform DNA. Its function is as follows. Plays a role in recovery after DNA ADP-ribosylation, probably via replication fork reversal. The polypeptide is Crossover junction endodeoxyribonuclease RuvC (Escherichia coli O127:H6 (strain E2348/69 / EPEC)).